Here is a 455-residue protein sequence, read N- to C-terminus: tRNA modification GTPase MnmE (455 aa).

Residues R23, E85, and R124 each coordinate (6S)-5-formyl-5,6,7,8-tetrahydrofolate. A TrmE-type G domain is found at 220 to 375 (GVSVVIAGKP…LQDAIFEAFI (156 aa)). K(+) is bound at residue N230. Residues 230-235 (NVGKSS), 249-255 (TSVPGTT), and 274-277 (DTAG) each bind GTP. Residue S234 coordinates Mg(2+). 3 residues coordinate K(+): T249, V251, and T254. T255 contributes to the Mg(2+) binding site. K455 provides a ligand contact to (6S)-5-formyl-5,6,7,8-tetrahydrofolate.

The protein belongs to the TRAFAC class TrmE-Era-EngA-EngB-Septin-like GTPase superfamily. TrmE GTPase family. Homodimer. Heterotetramer of two MnmE and two MnmG subunits. The cofactor is K(+).

Its subcellular location is the cytoplasm. Its function is as follows. Exhibits a very high intrinsic GTPase hydrolysis rate. Involved in the addition of a carboxymethylaminomethyl (cmnm) group at the wobble position (U34) of certain tRNAs, forming tRNA-cmnm(5)s(2)U34. This chain is tRNA modification GTPase MnmE, found in Geotalea uraniireducens (strain Rf4) (Geobacter uraniireducens).